A 434-amino-acid chain; its full sequence is Serine hydroxymethyltransferase (434 aa).

Residues Leu-133 and 137–139 (GHL) each bind (6S)-5,6,7,8-tetrahydrofolate. Residue Lys-242 is modified to N6-(pyridoxal phosphate)lysine.

This sequence belongs to the SHMT family. Homodimer. Requires pyridoxal 5'-phosphate as cofactor.

The protein localises to the cytoplasm. It catalyses the reaction (6R)-5,10-methylene-5,6,7,8-tetrahydrofolate + glycine + H2O = (6S)-5,6,7,8-tetrahydrofolate + L-serine. The protein operates within one-carbon metabolism; tetrahydrofolate interconversion. It functions in the pathway amino-acid biosynthesis; glycine biosynthesis; glycine from L-serine: step 1/1. Functionally, catalyzes the reversible interconversion of serine and glycine with tetrahydrofolate (THF) serving as the one-carbon carrier. This reaction serves as the major source of one-carbon groups required for the biosynthesis of purines, thymidylate, methionine, and other important biomolecules. Also exhibits THF-independent aldolase activity toward beta-hydroxyamino acids, producing glycine and aldehydes, via a retro-aldol mechanism. This Hyphomicrobium methylovorum protein is Serine hydroxymethyltransferase.